The sequence spans 294 residues: 4-hydroxy-tetrahydrodipicolinate synthase (294 aa).

Threonine 44 contributes to the pyruvate binding site. Tyrosine 132 (proton donor/acceptor) is an active-site residue. The active-site Schiff-base intermediate with substrate is the lysine 160. Valine 202 contributes to the pyruvate binding site.

The protein belongs to the DapA family. Homotetramer; dimer of dimers.

The protein localises to the cytoplasm. The catalysed reaction is L-aspartate 4-semialdehyde + pyruvate = (2S,4S)-4-hydroxy-2,3,4,5-tetrahydrodipicolinate + H2O + H(+). Its pathway is amino-acid biosynthesis; L-lysine biosynthesis via DAP pathway; (S)-tetrahydrodipicolinate from L-aspartate: step 3/4. Catalyzes the condensation of (S)-aspartate-beta-semialdehyde [(S)-ASA] and pyruvate to 4-hydroxy-tetrahydrodipicolinate (HTPA). In Leptospira borgpetersenii serovar Hardjo-bovis (strain L550), this protein is 4-hydroxy-tetrahydrodipicolinate synthase.